Reading from the N-terminus, the 585-residue chain is uncharacterized protein (585 aa).

This is an uncharacterized protein from Escherichia coli (strain K12).